We begin with the raw amino-acid sequence, 87 residues long: Transcription factor ILI4 (87 aa).

The region spanning 1-54 is the bHLH domain; sequence MSSRRSSRSSVSEEEINELISKLQSLLPSSRRRGANQASTTKLLKETCSYIKSL.

The protein belongs to the bHLH protein family. Interacts with LO9-177. As to expression, expressed in phloem of leaf blades and sheaths, lamina joints, filaments before anthesis, vasculare bundles of the ovule, lemma and palea, and embryos.

Its subcellular location is the cytoplasm. In terms of biological role, atypical and probable non DNA-binding bHLH transcription factor that acts as a positive regulator of brassinosteroid (BR) response. Controls lamina inclination by participating in two BR signaling pathways involving BRI1 and RGA1. Involved in the RLI1-dependent modulation of leaf inclination by promoting lamina joint cell elongation, especially in response to phosphate (Pi) availability. This Oryza sativa subsp. japonica (Rice) protein is Transcription factor ILI4 (ILI4).